Here is a 173-residue protein sequence, read N- to C-terminus: Alpha-crystallin A chain (173 aa).

M1 is subject to N-acetylmethionine. The segment at 1-63 (MDIAIQHPWF…RSVLDSGISE (63 aa)) is required for complex formation with BFSP1 and BFSP2. At Q6 the chain carries Deamidated glutamine; partial. Residue S45 is modified to Phosphoserine. Deamidated glutamine; partial is present on Q50. The sHSP domain maps to 52-162 (LFRSVLDSGI…GHSERAIPVS (111 aa)). At K70 the chain carries N6-acetyllysine. A Deamidated glutamine; partial modification is found at Q90. Residue K99 is modified to N6-acetyllysine. Residue H100 participates in Zn(2+) binding. The residue at position 101 (N101) is a Deamidated asparagine; partial. Zn(2+) is bound by residues E102 and H107. The residue at position 122 (S122) is a Phosphoserine. The residue at position 123 (N123) is a Deamidated asparagine; partial. The interval 144–173 (PKVTSGMDAGHSERAIPVSREEKPSSAPSS) is disordered. Over residues 153–167 (GHSERAIPVSREEKP) the composition is skewed to basic and acidic residues. H154 lines the Zn(2+) pocket. A glycan (O-linked (GlcNAc) serine) is linked at S162.

The protein belongs to the small heat shock protein (HSP20) family. In terms of assembly, heteromer composed of three CRYAA and one CRYAB subunits. Inter-subunit bridging via zinc ions enhances stability, which is crucial as there is no protein turn over in the lens. Can also form homodimers and homotetramers (dimers of dimers) which serve as the building blocks of homooligomers. Within homooligomers, the zinc-binding motif is created from residues of 3 different molecules. His-100 and Glu-102 from one molecule are ligands of the zinc ion, and His-107 and His-154 residues from additional molecules complete the site with tetrahedral coordination geometry. Part of a complex required for lens intermediate filament formation composed of BFSP1, BFSP2 and CRYAA. Acetylation at Lys-70 may increase chaperone activity. In terms of processing, undergoes age-dependent proteolytical cleavage at the C-terminus.

It localises to the cytoplasm. The protein localises to the nucleus. In terms of biological role, contributes to the transparency and refractive index of the lens. Acts as a chaperone, preventing aggregation of various proteins under a wide range of stress conditions. Required for the correct formation of lens intermediate filaments as part of a complex composed of BFSP1, BFSP2 and CRYAA. This chain is Alpha-crystallin A chain (CRYAA), found in Phocoena phocoena (Harbor porpoise).